The following is a 144-amino-acid chain: Catabolic 3-dehydroquinase (144 aa).

Y24 (proton acceptor) is an active-site residue. Substrate is bound by residues N76, H82, and D89. H102 serves as the catalytic Proton donor. Substrate-binding positions include I103–T104 and R113.

It belongs to the type-II 3-dehydroquinase family. Homododecamer. Adopts a ring-like structure, composed of an arrangement of two hexameric rings stacked on top of one another.

The catalysed reaction is 3-dehydroquinate = 3-dehydroshikimate + H2O. The protein operates within aromatic compound metabolism; 3,4-dihydroxybenzoate biosynthesis; 3,4-dihydroxybenzoate from 3-dehydroquinate: step 1/2. Is involved in the catabolism of quinate. Allows the utilization of quinate as carbon source via the beta-ketoadipate pathway. In Debaryomyces hansenii (strain ATCC 36239 / CBS 767 / BCRC 21394 / JCM 1990 / NBRC 0083 / IGC 2968) (Yeast), this protein is Catabolic 3-dehydroquinase.